Reading from the N-terminus, the 674-residue chain is Probable copper-transporting P-type ATPase B (674 aa).

Positions 1 to 22 (MNHSNQMHHDNHASHDHHSGHA) are disordered. Residues 7-19 (MHHDNHASHDHHS) are compositionally biased toward basic and acidic residues. 6 helical membrane-spanning segments follow: residues 32 to 52 (FFVS…MGVN), 57 to 77 (FTFP…FFYG), 95 to 115 (GMMT…LYAF), 127 to 147 (TMDF…GHWI), 284 to 304 (GYLF…WMLI), and 315 to 335 (LVTV…PLVT). Asp-367 (4-aspartylphosphate intermediate) is an active-site residue. Residues Asp-565 and Asp-569 each coordinate Mg(2+). A run of 2 helical transmembrane segments spans residues 623-645 (LWWG…AFIG) and 649-671 (SPAI…AFTL).

The protein belongs to the cation transport ATPase (P-type) (TC 3.A.3) family. Type IB subfamily.

It localises to the cell membrane. The enzyme catalyses Cu(+)(in) + ATP + H2O = Cu(+)(out) + ADP + phosphate + H(+). In terms of biological role, involved in copper transport. This chain is Probable copper-transporting P-type ATPase B (copB), found in Staphylococcus aureus (strain USA300 / TCH1516).